Reading from the N-terminus, the 201-residue chain is Adenylyl-sulfate kinase (201 aa).

G35–S42 serves as a coordination point for ATP. S109 functions as the Phosphoserine intermediate in the catalytic mechanism.

This sequence belongs to the APS kinase family.

It carries out the reaction adenosine 5'-phosphosulfate + ATP = 3'-phosphoadenylyl sulfate + ADP + H(+). It participates in sulfur metabolism; hydrogen sulfide biosynthesis; sulfite from sulfate: step 2/3. Its function is as follows. Catalyzes the synthesis of activated sulfate. The sequence is that of Adenylyl-sulfate kinase from Erwinia tasmaniensis (strain DSM 17950 / CFBP 7177 / CIP 109463 / NCPPB 4357 / Et1/99).